Reading from the N-terminus, the 78-residue chain is MSSNSNTDHSTGDNRSKSEKQTDLRNALRETESHGMPPLRGPAGFPVNPRPFSHGGNANLDRLNLKEPVDLEGPKDEQ.

A disordered region spans residues 1–78; that stretch reads MSSNSNTDHS…VDLEGPKDEQ (78 aa). Basic and acidic residues-rich tracts occupy residues 10 to 33 and 63 to 78; these read STGD…ETES and LNLK…KDEQ.

This is an uncharacterized protein from Schizosaccharomyces pombe (strain 972 / ATCC 24843) (Fission yeast).